A 296-amino-acid polypeptide reads, in one-letter code: NAD kinase (296 aa).

The Proton acceptor role is filled by Asp78. NAD(+) contacts are provided by residues 78–79 (DG), 152–153 (ND), Arg180, Asp182, and Gln251.

It belongs to the NAD kinase family. The cofactor is a divalent metal cation.

The protein localises to the cytoplasm. It catalyses the reaction NAD(+) + ATP = ADP + NADP(+) + H(+). Its function is as follows. Involved in the regulation of the intracellular balance of NAD and NADP, and is a key enzyme in the biosynthesis of NADP. Catalyzes specifically the phosphorylation on 2'-hydroxyl of the adenosine moiety of NAD to yield NADP. This Neisseria gonorrhoeae (strain ATCC 700825 / FA 1090) protein is NAD kinase.